The primary structure comprises 474 residues: Immunoglobulin heavy constant mu (474 aa).

Residues 1–105 (GSASAPTLFP…NKEKNVPLPV (105 aa)) are CH1. The Extracellular segment spans residues 1 to 450 (GSASAPTLFP…EEGFENLWAT (450 aa)). Ig-like domains follow at residues 6–102 (PTLF…KNVP), 111–211 (PKVS…QNAS), 229–319 (PSFA…QTIS), and 329–430 (PDVY…RTVD). 2 disulfide bridges follow: Cys28-Cys88 and Cys134-Cys197. N-linked (GlcNAc...) (complex) asparagine glycosylation occurs at Asn46. Residues 106-217 (IAELPPKVSV…QNASSMCVPD (112 aa)) are CH2. Asn209 carries N-linked (GlcNAc...) (complex) asparagine glycosylation. Residues 218 to 323 (QDTAIRVFAI…LKQTISRPKG (106 aa)) form a CH3 region. 2 cysteine pairs are disulfide-bonded: Cys244/Cys303 and Cys351/Cys413. Residues Asn272 and Asn279 are each glycosylated (N-linked (GlcNAc...) asparagine). Residues 324-452 (VALHRPDVYL…GFENLWATAS (129 aa)) are CH4. The segment at 437–453 (VSADEEGFENLWATAST) is important for IgM oligomerization. Asp440 carries N-linked (GlcNAc...) asparagine glycosylation. A helical transmembrane segment spans residues 451-471 (ASTFIVLFLLSLFYSTTVTLF). Residues 472–474 (KVK) are Cytoplasmic-facing.

In terms of assembly, the basic structural unit of both sIgM and mIgM molecules consists of two identical heavy chains and two identical light chains; disulfide-linked. N-terminal variable regions of the heavy and light chains form the antigen binding sites, whereas the C-terminal constant regions of the heavy chains interact with immune receptors to mediate effector functions. As to quaternary structure, part of IgM antibody. Forms high order oligomers, homopentamers stabilized by the JCHAIN and homohexamers that lack JCHAIN. The oligomerization amplifies an inherently low affinity of IgM antibodies for the antigen by multi-point attachment (avidity). Adjacent IgM protomers associate via interchain disulfide links to form an asymmetric pentameric structure with a 50 degree gap. A single copy of JCHAIN is covalently linked to the first and the fifth IgM monomers via interchain disulfide bonds thus closing the pentamer ring. Only JCHAIN-containing IgM binds PIGR secretory component (via D1-CDR1 region); this interaction is a prerequisite for IgM transcytosis across mucosal epithelium. Pentameric sIgM interacts (via CH4 domain) with FCRM (via Ig-like domain); the interaction is glycan-independent and multivalent theoretically involving up to eight binding sites for the IgM pentamer. Interacts with FCAMR; this interaction facilitates the endocytosis of IgM-coated microbes or IgM-antigen immune complexes. Antigen-bound IgM (via the Fc region) binds to globular domains of C1q component of the complement system, all three modules C1QA, C1QB and C1QC being involved in IgM binding; this interaction is multivalent. Pentameric sIgM (via Fc region) interacts with CD5L (via SRCR2) through interchain disulfide-linkages; this interaction protects CD5L from renal excretion and provides for high levels of CD5L in circulation. Part of IgM B cell receptor complex on pre-B cells, immature and mature B cells. The BCR complex consists of one membrane-bound IgM molecule responsible for antigen binding, non-covalently associated with CD79A and CD79B signaling chains. N-glycosylated; important for IgM secretion and its localization at the plasma membrane. The interaction with FCMR is glycan-independent.

It localises to the secreted. The protein resides in the cell membrane. Its function is as follows. Constant region of immunoglobulin heavy chains. Immunoglobulins, also known as antibodies, are membrane-bound or secreted glycoproteins produced by B lymphocytes. In the recognition phase of humoral immunity, the membrane-bound immunoglobulins serve as receptors which, upon binding of a specific antigen, trigger the clonal expansion and differentiation of B lymphocytes into immunoglobulins-secreting plasma cells. Secreted immunoglobulins mediate the effector phase of humoral immunity, which results in the elimination of bound antigens. The antigen binding site is formed by the variable domain of one heavy chain, together with that of its associated light chain. Thus, each immunoglobulin has two antigen binding sites with remarkable affinity for a particular antigen. The variable domains are assembled by a process called V-(D)-J rearrangement and can then be subjected to somatic hypermutations which, after exposure to antigen and selection, allow affinity maturation for a particular antigen. In terms of biological role, constant region of secreted IgM (sIgM), also known as the Fc region of IgM antibody. Able to multimerize, forms high order polymers, mainly pentamers and occasionally hexamers, providing for multivalency and high avidity recognition of antigens. Natural sIgM are polyreactive and recognize conserved self- and pathogen-derived structures, whereas immune sIgM are secreted only upon exposure to pathogens and are antigen-specific. Both natural and immune sIgM are required for an efficient humoral immune response to infection. Mediates sIgM effector functions mostly via Fc receptors and the complement system. On lymphoid cells binds high-affinity Fc receptor FCMR and promotes induction of an efficient neutralizing IgG response while maintaining tolerance to self-antigens. Recruits C1q complement component to initiate the classical complement pathway, facilitating the recognition and neutralization of pathogens by the host. Together with C1q and mannose-binding lectin promotes the phagocytosis of apoptotic cells by macrophages, ensuring the clearance of potential autoimmune epitopes from tissues. Involved in mucosal immunity. It is transported by transcytosis across mucosal epithelium by PIGR and secreted on the apical side in complex with PIGR secretory component to scan mucosal lining for pathogens. IgM-antigen complexes undergo FCMR-mediated retrotranscytosis across mucosal M cells toward antigen-presenting cells in mucosal lymphoid tissues. Functionally, constant region of membrane-bound IgM, part of the B cell receptor complex (BCR). IgM BCR provides constitutive tonic signaling for B cell survival. Mediates pre-BCR signaling that regulates B cell selection and rearrangement of Ig genes via allelic exclusion. The sequence is that of Immunoglobulin heavy constant mu from Homo sapiens (Human).